Reading from the N-terminus, the 672-residue chain is DNA ligase (672 aa).

Residues 34 to 38 (DSVYD), 83 to 84 (SL), and E113 contribute to the NAD(+) site. The active-site N6-AMP-lysine intermediate is K115. R136, E170, K286, and K310 together coordinate NAD(+). 4 residues coordinate Zn(2+): C404, C407, C422, and C427. One can recognise a BRCT domain in the interval 592 to 672 (STDSSFNGLR…EFIQQMEEES (81 aa)).

The protein belongs to the NAD-dependent DNA ligase family. LigA subfamily. Mg(2+) is required as a cofactor. It depends on Mn(2+) as a cofactor.

It carries out the reaction NAD(+) + (deoxyribonucleotide)n-3'-hydroxyl + 5'-phospho-(deoxyribonucleotide)m = (deoxyribonucleotide)n+m + AMP + beta-nicotinamide D-nucleotide.. DNA ligase that catalyzes the formation of phosphodiester linkages between 5'-phosphoryl and 3'-hydroxyl groups in double-stranded DNA using NAD as a coenzyme and as the energy source for the reaction. It is essential for DNA replication and repair of damaged DNA. The chain is DNA ligase from Ligilactobacillus salivarius (strain UCC118) (Lactobacillus salivarius).